A 118-amino-acid chain; its full sequence is Class I hydrophobin 1 (118 aa).

The first 20 residues, 1 to 20 (MFARLSTALLAFTLATAVVA), serve as a signal peptide directing secretion. 4 cysteine pairs are disulfide-bonded: cysteine 34-cysteine 97, cysteine 41-cysteine 91, cysteine 42-cysteine 77, and cysteine 98-cysteine 111. Asparagine 54 carries an N-linked (GlcNAc...) asparagine glycan. N-linked (GlcNAc...) asparagine glycosylation is present at asparagine 115.

This sequence belongs to the fungal hydrophobin family. As to quaternary structure, self-assembles to form functional amyloid fibrils called rodlets. Self-assembly into fibrillar rodlets occurs spontaneously at hydrophobic:hydrophilic interfaces and the rodlets further associate laterally to form amphipathic monolayers.

Its subcellular location is the secreted. It is found in the cell wall. Its function is as follows. Aerial growth, conidiation, and dispersal of filamentous fungi in the environment rely upon a capability of their secreting small amphipathic proteins called hydrophobins (HPBs) with low sequence identity. Class I can self-assemble into an outermost layer of rodlet bundles on aerial cell surfaces, conferring cellular hydrophobicity that supports fungal growth, development and dispersal; whereas Class II form highly ordered films at water-air interfaces through intermolecular interactions but contribute nothing to the rodlet structure. The protein is Class I hydrophobin 1 of Coprinopsis cinerea (strain Okayama-7 / 130 / ATCC MYA-4618 / FGSC 9003) (Inky cap fungus).